Reading from the N-terminus, the 466-residue chain is Probable fibrosin-1 (466 aa).

A Glycyl lysine isopeptide (Lys-Gly) (interchain with G-Cter in SUMO2) cross-link involves residue lysine 8. An asymmetric dimethylarginine mark is found at arginine 229 and arginine 239. 2 disordered regions span residues 236 to 315 (AWVR…AAAA) and 410 to 466 (LLYS…RADR). Positions 248 to 272 (GSDKERPMERREPSVTKEEKDRDLP) are enriched in basic and acidic residues. Serine 281 is subject to Phosphoserine. The segment covering 288 to 311 (RAGEEGARPAKESVRVKEERKEEA) has biased composition (basic and acidic residues). Residues 442 to 459 (APPPLVPAPRPSSPPRAP) are compositionally biased toward pro residues.

In Mus musculus (Mouse), this protein is Probable fibrosin-1 (Fbrs).